The chain runs to 151 residues: uncharacterized protein (151 aa).

Over residues 40-57 the composition is skewed to polar residues; sequence QMNRRNSENNTFDASNVG. The tract at residues 40 to 125 is disordered; that stretch reads QMNRRNSENN…KRQPHYAEPI (86 aa). Residues 83–110 show a composition bias toward low complexity; that stretch reads QRQNGRQHQHAGQQQPQHQHTQSQTRQT.

This is an uncharacterized protein from Bacillus subtilis (strain 168).